A 59-amino-acid chain; its full sequence is Large ribosomal subunit protein uL30 (59 aa).

This sequence belongs to the universal ribosomal protein uL30 family. As to quaternary structure, part of the 50S ribosomal subunit.

The polypeptide is Large ribosomal subunit protein uL30 (Aliivibrio salmonicida (strain LFI1238) (Vibrio salmonicida (strain LFI1238))).